The following is a 223-amino-acid chain: TMF-regulated nuclear protein 1 (223 aa).

Disordered stretches follow at residues 1–84 and 196–223; these read MPGC…GPAG and GRLR…SPQR. The span at 21–54 shows a compositional bias: pro residues; it reads GSPPPPPREPLPSLQPPSPSPTSTPTPTKSPPLP. A compositionally biased stretch (gly residues) spans 73–84; it reads ASGGSGGAGPAG.

Interacts with TMF1; may regulate TRNP1 proteasomal degradation. Ubiquitinated, leading to its degradation by the proteasome. Expressed in brain and kidney (at protein level). Also detected in spleen and intestine.

It is found in the nucleus. DNA-binding factor that regulates the expression of a subset of genes and plays a key role in tangential, radial, and lateral expansion of the brain neocortex. Regulates neural stem cells proliferation and the production of intermediate neural progenitors and basal radial glial cells affecting the process of cerebral cortex gyrification. May control the proliferation rate of cells by regulating their progression through key cell-cycle transition points. The polypeptide is TMF-regulated nuclear protein 1 (Trnp1) (Mus musculus (Mouse)).